The primary structure comprises 150 residues: 15 kDa calcium-binding protein (150 aa).

Position 1 is an N-acetylalanine (A1). EF-hand domains lie at 7-42 (TDAEKAEFKFGFKSKDGDNSITAKELGEFLESAGKS), 43-78 (FSEEQLAQMISDVDTDKSGTIEFSEMLMGIAEKMMK), 81-116 (WKKSHFQKAFDDMDKDGNGVLSPEELHLAMSTRIEP), and 118-150 (MSKEAIDAIIAKADCDGDGKINRKEFVKLIKSS). Ca(2+) contacts are provided by D22, D24, S26, T28, D56, D58, S60, T62, E67, D94, D96, N98, E105, D131, D133, D135, K137, and E142.

It is found in the nucleus. Its subcellular location is the cytoplasm. It localises to the cytoskeleton. The protein localises to the spindle. Functionally, may play an important role in mitosis of sea urchin egg. May function as a Ca(2+)-dependent intracellular modulator of microtubule assembly. The sequence is that of 15 kDa calcium-binding protein from Hemicentrotus pulcherrimus (Sea urchin).